The primary structure comprises 142 residues: Large ribosomal subunit protein uL13 (142 aa).

It belongs to the universal ribosomal protein uL13 family. In terms of assembly, part of the 50S ribosomal subunit.

Its function is as follows. This protein is one of the early assembly proteins of the 50S ribosomal subunit, although it is not seen to bind rRNA by itself. It is important during the early stages of 50S assembly. This is Large ribosomal subunit protein uL13 from Stenotrophomonas maltophilia (strain R551-3).